The sequence spans 404 residues: Zinc finger TRAF-type-containing protein 1 (404 aa).

Positions 1 to 13 are enriched in gly residues; sequence MSGAEEAGGGGPA. Positions 1 to 22 are disordered; sequence MSGAEEAGGGGPAAGPAGSVPA. The segment at 111-156 adopts an RING-type; degenerate zinc-finger fold; that stretch reads CTVCLDLPKASVYQCTNGHLMCAGCFIHLLADARLKEEQATCPNCR. The TRAF-type zinc-finger motif lies at 152 to 225; it reads CPNCRCEISK…PWHGPFHELT (74 aa).

It belongs to the ZFTRAF1 family. As to quaternary structure, interacts with LGALS3.

The protein localises to the cytoplasm. Its subcellular location is the perinuclear region. The chain is Zinc finger TRAF-type-containing protein 1 from Homo sapiens (Human).